Here is a 777-residue protein sequence, read N- to C-terminus: NAD(P)H-quinone oxidoreductase subunit 5, chloroplastic (777 aa).

Transmembrane regions (helical) follow at residues 9–29 (WIIP…LLLF), 40–60 (WSFP…YLSI), 89–109 (IDPL…LVLF), 125–145 (FAYL…SNLI), 147–167 (IYIF…FWFT), 185–205 (GDFG…SFEF), 220–240 (NQVH…GAVA), 259–279 (TPIS…FLVA), 290–312 (YIMN…LALA), 328–348 (LGYM…FHLI), 355–375 (ALLF…VGYS), 397–417 (TAFL…CFWS), 426–446 (WLYS…TAFY), 550–570 (LFSL…GIPF), 604–624 (FVTN…IATF), and 731–751 (IFIF…FFVL).

The protein belongs to the complex I subunit 5 family. As to quaternary structure, NDH is composed of at least 16 different subunits, 5 of which are encoded in the nucleus.

It localises to the plastid. Its subcellular location is the chloroplast thylakoid membrane. It catalyses the reaction a plastoquinone + NADH + (n+1) H(+)(in) = a plastoquinol + NAD(+) + n H(+)(out). The catalysed reaction is a plastoquinone + NADPH + (n+1) H(+)(in) = a plastoquinol + NADP(+) + n H(+)(out). NDH shuttles electrons from NAD(P)H:plastoquinone, via FMN and iron-sulfur (Fe-S) centers, to quinones in the photosynthetic chain and possibly in a chloroplast respiratory chain. The immediate electron acceptor for the enzyme in this species is believed to be plastoquinone. Couples the redox reaction to proton translocation, and thus conserves the redox energy in a proton gradient. In Oenothera elata subsp. hookeri (Hooker's evening primrose), this protein is NAD(P)H-quinone oxidoreductase subunit 5, chloroplastic (ndhF).